A 192-amino-acid polypeptide reads, in one-letter code: Vascular endothelial growth factor A (192 aa).

Positions 1 to 26 are cleaved as a signal peptide; sequence MNFLLSWIHWGLAALLYFHNAKVLQA. 3 disulfides stabilise this stretch: cysteine 52–cysteine 94, cysteine 83–cysteine 128, and cysteine 87–cysteine 130. Residue asparagine 101 is glycosylated (N-linked (GlcNAc...) asparagine).

Belongs to the PDGF/VEGF growth factor family. In terms of assembly, homodimer; disulfide-linked. Also found as heterodimer with PGF Interacts with FLT1/VEGFR1 and KDR/VEGFR2 receptors, heparan sulfate and heparin. In terms of tissue distribution, expressed by the venom gland, and probably other tissues.

Its subcellular location is the secreted. In terms of biological role, growth factor active in angiogenesis, vasculogenesis and endothelial cell growth. Induces endothelial cell proliferation, promotes cell migration, inhibits apoptosis and induces permeabilization of blood vessels. In Vipera ammodytes ammodytes (Western sand viper), this protein is Vascular endothelial growth factor A.